Reading from the N-terminus, the 58-residue chain is uncharacterized protein (58 aa).

This is an uncharacterized protein from Bacillus subtilis (strain 168).